A 297-amino-acid chain; its full sequence is Proline iminopeptidase (297 aa).

An AB hydrolase-1 domain is found at 26–131; the sequence is VLLLHGGPAM…GLLVSNMMAS (106 aa). The active-site Nucleophile is Ser-103. The active site involves Asp-243. His-270 serves as the catalytic Proton donor.

This sequence belongs to the peptidase S33 family. As to quaternary structure, monomer.

The enzyme catalyses Release of N-terminal proline from a peptide.. Releases the N-terminal proline from various substrates. The sequence is that of Proline iminopeptidase (fpaP) from Flavobacterium johnsoniae (strain ATCC 17061 / DSM 2064 / JCM 8514 / BCRC 14874 / CCUG 350202 / NBRC 14942 / NCIMB 11054 / UW101) (Cytophaga johnsonae).